The sequence spans 198 residues: Transcriptional regulator GfcR (198 aa).

This sequence belongs to the purine/pyrimidine phosphoribosyltransferase family. GfcR subfamily.

The chain is Transcriptional regulator GfcR from Methanocorpusculum labreanum (strain ATCC 43576 / DSM 4855 / Z).